The chain runs to 792 residues: Phosphoenolpyruvate synthase (792 aa).

The active-site Tele-phosphohistidine intermediate is H421. 7 residues coordinate substrate: R511, R578, E680, G701, S702, N703, and D704. E680 contributes to the Mg(2+) binding site. D704 is a binding site for Mg(2+). C751 acts as the Proton donor in catalysis.

This sequence belongs to the PEP-utilizing enzyme family. Homodimer. Requires Mg(2+) as cofactor.

The enzyme catalyses pyruvate + ATP + H2O = phosphoenolpyruvate + AMP + phosphate + 2 H(+). It participates in carbohydrate biosynthesis; gluconeogenesis. With respect to regulation, activated by a Pi-dependent pyrophosphorylation and inactivated by an ADP-dependent phosphorylation on a regulatory threonine. Both reactions are mediated by the bifunctional serine/threonine kinase and phosphorylase PpsR. Functionally, catalyzes the phosphorylation of pyruvate to phosphoenolpyruvate. The polypeptide is Phosphoenolpyruvate synthase (ppsA) (Escherichia coli (strain K12)).